The following is a 427-amino-acid chain: Adenylosuccinate synthetase (427 aa).

Residues 12-18 and 40-42 contribute to the GTP site; these read GDEGKGK and GHT. Residue aspartate 13 is the Proton acceptor of the active site. Aspartate 13 and glycine 40 together coordinate Mg(2+). IMP contacts are provided by residues 13 to 16, 38 to 41, threonine 128, arginine 142, glutamine 223, threonine 238, and arginine 302; these read DEGK and NAGH. Histidine 41 serves as the catalytic Proton donor. A substrate-binding site is contributed by 298–304; the sequence is VTTGRAR. GTP contacts are provided by residues arginine 304, 330 to 332, and 412 to 414; these read KLD and GVG.

Belongs to the adenylosuccinate synthetase family. As to quaternary structure, homodimer. Mg(2+) is required as a cofactor.

The protein resides in the cytoplasm. The catalysed reaction is IMP + L-aspartate + GTP = N(6)-(1,2-dicarboxyethyl)-AMP + GDP + phosphate + 2 H(+). It functions in the pathway purine metabolism; AMP biosynthesis via de novo pathway; AMP from IMP: step 1/2. Functionally, plays an important role in the de novo pathway of purine nucleotide biosynthesis. Catalyzes the first committed step in the biosynthesis of AMP from IMP. This is Adenylosuccinate synthetase from Frankia casuarinae (strain DSM 45818 / CECT 9043 / HFP020203 / CcI3).